The primary structure comprises 461 residues: Probable ribonuclease FAU-1 (461 aa).

Residues 89 to 158 form the S1 motif domain; it reads GAVFYGEVTE…ARPSLATALR (70 aa).

This sequence belongs to the FAU-1 family.

Its function is as follows. Probable RNase involved in rRNA stability through maturation and/or degradation of precursor rRNAs. Binds to RNA in loop regions with AU-rich sequences. This Natronomonas pharaonis (strain ATCC 35678 / DSM 2160 / CIP 103997 / JCM 8858 / NBRC 14720 / NCIMB 2260 / Gabara) (Halobacterium pharaonis) protein is Probable ribonuclease FAU-1.